We begin with the raw amino-acid sequence, 396 residues long: Tryptophan synthase beta chain (396 aa).

At Lys-88 the chain carries N6-(pyridoxal phosphate)lysine.

This sequence belongs to the TrpB family. In terms of assembly, tetramer of two alpha and two beta chains. Pyridoxal 5'-phosphate is required as a cofactor.

It catalyses the reaction (1S,2R)-1-C-(indol-3-yl)glycerol 3-phosphate + L-serine = D-glyceraldehyde 3-phosphate + L-tryptophan + H2O. Its pathway is amino-acid biosynthesis; L-tryptophan biosynthesis; L-tryptophan from chorismate: step 5/5. In terms of biological role, the beta subunit is responsible for the synthesis of L-tryptophan from indole and L-serine. The polypeptide is Tryptophan synthase beta chain (Shewanella oneidensis (strain ATCC 700550 / JCM 31522 / CIP 106686 / LMG 19005 / NCIMB 14063 / MR-1)).